The chain runs to 341 residues: Serpentine receptor class epsilon-12 (341 aa).

7 helical membrane-spanning segments follow: residues 30-50 (TAFYVADTINMMFYIWVLFSA), 57-77 (FTLVSGTQYVIHFFDNLAIIV), 101-121 (AMTFSVYCIVAAMCSLPFSIL), 140-160 (YISYALVFLLNFIGIIGAILL), 167-187 (IFVVAFLMILNLFALLTNQFL), 230-250 (LNFIILYMGFMNVCLVISVLF), and 262-282 (ICSLALDASIFFYSFAIPQIM).

Belongs to the nematode receptor-like protein sre family.

The protein localises to the membrane. The polypeptide is Serpentine receptor class epsilon-12 (sre-12) (Caenorhabditis elegans).